We begin with the raw amino-acid sequence, 470 residues long: Coproporphyrinogen III oxidase (470 aa).

Residues Gly12–Gly17, Glu41–Ala42, Lys49, Gly63–Ser66, Val256, Trp409, and Val448–Ile450 each bind FAD.

Belongs to the protoporphyrinogen/coproporphyrinogen oxidase family. Coproporphyrinogen III oxidase subfamily. Monomer. FAD serves as cofactor.

It is found in the cytoplasm. Its subcellular location is the cell membrane. The enzyme catalyses coproporphyrinogen III + 3 O2 = coproporphyrin III + 3 H2O2. The protein operates within porphyrin-containing compound metabolism; protoheme biosynthesis. With respect to regulation, only weakly inhibited by acifluorfen, in contrast to eukaryotic family members. Weakly inhibited by methylacifluorfen. Bilirubin, biliverdin and hemin are all competitive inhibitors. Functionally, involved in coproporphyrin-dependent heme b biosynthesis. Catalyzes the oxidation of coproporphyrinogen III to coproporphyrin III. Can also oxidize protoporphyrinogen IX to protoporphyrin-IX. The specific activity for the oxidation of coproporphyrinogen III is much higher than that for the oxidation of protoporphyrinogen IX. Can also oxidize mesoporphyrinogen IX, but not uroporphyrinogen III. This chain is Coproporphyrinogen III oxidase, found in Bacillus subtilis (strain 168).